We begin with the raw amino-acid sequence, 233 residues long: UPF0758 protein RoseRS_0767 (233 aa).

Residues 107–229 (LIRSPTDAAQ…FVSMRERGLG (123 aa)) form the MPN domain. 3 residues coordinate Zn(2+): His178, His180, and Asp191. The JAMM motif signature appears at 178 to 191 (HNHPSGDPTPSPED).

Belongs to the UPF0758 family.

This chain is UPF0758 protein RoseRS_0767, found in Roseiflexus sp. (strain RS-1).